Consider the following 646-residue polypeptide: MSSQKKKISLFAFFLLTVITITLKTYFSYYVDFSLGVKGLVQNLILLMNPYSLVALVLSVFLFFKGKKAFWFMFIGGFLLTFLLYANVVYFRFFSDFLTFSTLNQVGNVESMGGAVSASFKWYDFVYFIDTLVYLFILIFKTKWLDTKAFSKKFVPVVMAASVALFFLNLAFAETDRPELLTRTFDHKYLVKYLGPYNFTVYDGVKTIENNQQKALASEDDLTKVLNYTKQRQTEPNPEYYGVAKKKNIIKIHLESFQTFLINKKVNGKEVTPFLNKLSSGKEQFTYFPNFFHQTGQGKTSDSEFTMDNSLYGLPQGSAFSLKGDNTYQSLPAILDQKQGYKSDVMHGDYKTFWNRDQVYKHFGIDKFYDATYYDMSDKNVVNLGLKDKIFFKDSANYQAKMKSPFYSHLITLTNHYPFTLDEKDATIEKSNTGDATVDGYIQTARYLDEALEEYINDLKKKGLYDNSVIMIYGDHYGISENHNNAMEKLLGEKITPAKFTDLNRTGFWIKIPGKSGGINNEYAGQVDVMPTILHLAGIDTKNYLMFGTDLFSKGHNQVVPFRNGDFITKDYKYVNGKIYSNKNNELITTQPADFEKNKKQVEKDLEMSDNVLNGDLFRFYKNPDFKKVNPSKYKYETGPKANSKK.

Residues 1 to 7 (MSSQKKK) lie on the Cytoplasmic side of the membrane. A helical membrane pass occupies residues 8-28 (ISLFAFFLLTVITITLKTYFS). The Extracellular portion of the chain corresponds to 29-43 (YYVDFSLGVKGLVQN). A helical transmembrane segment spans residues 44–64 (LILLMNPYSLVALVLSVFLFF). Over 65–68 (KGKK) the chain is Cytoplasmic. Residues 69 to 89 (AFWFMFIGGFLLTFLLYANVV) traverse the membrane as a helical segment. Over 90 to 119 (YFRFFSDFLTFSTLNQVGNVESMGGAVSAS) the chain is Extracellular. A helical transmembrane segment spans residues 120–140 (FKWYDFVYFIDTLVYLFILIF). Topologically, residues 141 to 153 (KTKWLDTKAFSKK) are cytoplasmic. A helical transmembrane segment spans residues 154–174 (FVPVVMAASVALFFLNLAFAE). The Extracellular portion of the chain corresponds to 175–646 (TDRPELLTRT…ETGPKANSKK (472 aa)). Mn(2+) is bound by residues glutamate 255 and threonine 300. The active site involves threonine 300. Residue histidine 416 coordinates substrate. Mn(2+) contacts are provided by aspartate 475 and histidine 476. Positions 623-638 (NPDFKKVNPSKYKYET) are enriched in basic and acidic residues. Residues 623–646 (NPDFKKVNPSKYKYETGPKANSKK) form a disordered region.

The protein belongs to the LTA synthase family. Proteolytically cleaved.

The protein resides in the cell membrane. It is found in the secreted. The protein operates within cell wall biogenesis; lipoteichoic acid biosynthesis. Its function is as follows. Catalyzes the polymerization of lipoteichoic acid (LTA) polyglycerol phosphate, a reaction that presumably uses phosphatidylglycerol (PG) as substrate. Is required for staphylococcal growth and cell division process. The protein is Lipoteichoic acid synthase (ltaS) of Staphylococcus aureus (strain USA300).